The following is a 162-amino-acid chain: MKLDQAARGLFLTELVSGFFLAMRYFFKPKATLNYPFEKGPLSPRFRGEHALRRYPNGEERCIACKLCEAICPAQAITIEAGPRRNDGTRRTTRYDIDMVKCIYCGFCQEACPVDAIVEGPNFEFAAETREELYYDKEKLLANGDRWEREIARSIAMDAPYR.

2 consecutive 4Fe-4S ferredoxin-type domains span residues 52–82 and 93–122; these read LRRY…IEAG and TRYD…EGPN. Residues C62, C65, C68, C72, C102, C105, C108, and C112 each coordinate [4Fe-4S] cluster.

It belongs to the complex I 23 kDa subunit family. NDH-1 is composed of 14 different subunits. Subunits NuoA, H, J, K, L, M, N constitute the membrane sector of the complex. It depends on [4Fe-4S] cluster as a cofactor.

The protein resides in the cell inner membrane. The enzyme catalyses a quinone + NADH + 5 H(+)(in) = a quinol + NAD(+) + 4 H(+)(out). Functionally, NDH-1 shuttles electrons from NADH, via FMN and iron-sulfur (Fe-S) centers, to quinones in the respiratory chain. The immediate electron acceptor for the enzyme in this species is believed to be ubiquinone. Couples the redox reaction to proton translocation (for every two electrons transferred, four hydrogen ions are translocated across the cytoplasmic membrane), and thus conserves the redox energy in a proton gradient. This is NADH-quinone oxidoreductase subunit I from Xanthobacter autotrophicus (strain ATCC BAA-1158 / Py2).